The chain runs to 55 residues: uncharacterized protein (55 aa).

The disordered stretch occupies residues Met-1 to Ser-30.

This is an uncharacterized protein from Frog virus 3 (isolate Goorha) (FV-3).